Reading from the N-terminus, the 383-residue chain is 1-deoxy-D-xylulose 5-phosphate reductoisomerase (383 aa).

Residues Thr10, Gly11, Ser12, Ile13, Gly36, Arg37, Asn38, and Asn122 each coordinate NADPH. Residue Lys123 coordinates 1-deoxy-D-xylulose 5-phosphate. An NADPH-binding site is contributed by Glu124. Asp148 lines the Mn(2+) pocket. Residues Ser149, Glu150, Ser174, and His197 each contribute to the 1-deoxy-D-xylulose 5-phosphate site. Glu150 is a Mn(2+) binding site. Residue Gly203 participates in NADPH binding. Residues Ser210, Asn215, Lys216, and Glu219 each coordinate 1-deoxy-D-xylulose 5-phosphate. Glu219 contributes to the Mn(2+) binding site.

This sequence belongs to the DXR family. Mg(2+) is required as a cofactor. Requires Mn(2+) as cofactor.

It catalyses the reaction 2-C-methyl-D-erythritol 4-phosphate + NADP(+) = 1-deoxy-D-xylulose 5-phosphate + NADPH + H(+). It participates in isoprenoid biosynthesis; isopentenyl diphosphate biosynthesis via DXP pathway; isopentenyl diphosphate from 1-deoxy-D-xylulose 5-phosphate: step 1/6. Its function is as follows. Catalyzes the NADPH-dependent rearrangement and reduction of 1-deoxy-D-xylulose-5-phosphate (DXP) to 2-C-methyl-D-erythritol 4-phosphate (MEP). The sequence is that of 1-deoxy-D-xylulose 5-phosphate reductoisomerase from Bacillus pumilus (strain SAFR-032).